Here is a 372-residue protein sequence, read N- to C-terminus: N-methyl-L-tryptophan oxidase (372 aa).

Position 4 to 34 (D4 to H34) interacts with FAD. C307 carries the S-8alpha-FAD cysteine modification.

The protein belongs to the MSOX/MTOX family. MTOX subfamily. In terms of assembly, monomer. It depends on FAD as a cofactor.

It catalyses the reaction N(alpha)-methyl-L-tryptophan + O2 + H2O = L-tryptophan + formaldehyde + H2O2. Catalyzes the oxidative demethylation of N-methyl-L-tryptophan. This chain is N-methyl-L-tryptophan oxidase, found in Salmonella dublin (strain CT_02021853).